The sequence spans 194 residues: 3-isopropylmalate dehydratase small subunit (194 aa).

Belongs to the LeuD family. LeuD type 1 subfamily. In terms of assembly, heterodimer of LeuC and LeuD.

It catalyses the reaction (2R,3S)-3-isopropylmalate = (2S)-2-isopropylmalate. It participates in amino-acid biosynthesis; L-leucine biosynthesis; L-leucine from 3-methyl-2-oxobutanoate: step 2/4. Its function is as follows. Catalyzes the isomerization between 2-isopropylmalate and 3-isopropylmalate, via the formation of 2-isopropylmaleate. This is 3-isopropylmalate dehydratase small subunit from Halalkalibacterium halodurans (strain ATCC BAA-125 / DSM 18197 / FERM 7344 / JCM 9153 / C-125) (Bacillus halodurans).